A 257-amino-acid polypeptide reads, in one-letter code: 3-deoxy-manno-octulosonate cytidylyltransferase (257 aa).

This sequence belongs to the KdsB family.

The protein resides in the cytoplasm. It carries out the reaction 3-deoxy-alpha-D-manno-oct-2-ulosonate + CTP = CMP-3-deoxy-beta-D-manno-octulosonate + diphosphate. Its pathway is nucleotide-sugar biosynthesis; CMP-3-deoxy-D-manno-octulosonate biosynthesis; CMP-3-deoxy-D-manno-octulosonate from 3-deoxy-D-manno-octulosonate and CTP: step 1/1. It participates in bacterial outer membrane biogenesis; lipopolysaccharide biosynthesis. In terms of biological role, activates KDO (a required 8-carbon sugar) for incorporation into bacterial lipopolysaccharide in Gram-negative bacteria. This chain is 3-deoxy-manno-octulosonate cytidylyltransferase, found in Rhodospirillum centenum (strain ATCC 51521 / SW).